The chain runs to 156 residues: SsrA-binding protein (156 aa).

It belongs to the SmpB family.

Its subcellular location is the cytoplasm. In terms of biological role, required for rescue of stalled ribosomes mediated by trans-translation. Binds to transfer-messenger RNA (tmRNA), required for stable association of tmRNA with ribosomes. tmRNA and SmpB together mimic tRNA shape, replacing the anticodon stem-loop with SmpB. tmRNA is encoded by the ssrA gene; the 2 termini fold to resemble tRNA(Ala) and it encodes a 'tag peptide', a short internal open reading frame. During trans-translation Ala-aminoacylated tmRNA acts like a tRNA, entering the A-site of stalled ribosomes, displacing the stalled mRNA. The ribosome then switches to translate the ORF on the tmRNA; the nascent peptide is terminated with the 'tag peptide' encoded by the tmRNA and targeted for degradation. The ribosome is freed to recommence translation, which seems to be the essential function of trans-translation. This is SsrA-binding protein from Shouchella clausii (strain KSM-K16) (Alkalihalobacillus clausii).